Consider the following 75-residue polypeptide: MFTMKKPLLFLFFLGTISLSFCEEERGADEDDEVEMTEEEKRGLRDKIKNVAIDVAKGAGTGVLKALLCQLDKSC.

The first 22 residues, 1 to 22 (MFTMKKPLLFLFFLGTISLSFC), serve as a signal peptide directing secretion. The propeptide at 23-40 (EEERGADEDDEVEMTEEE) is removed in mature form. Cys-69 and Cys-75 are joined by a disulfide.

It belongs to the frog skin active peptide (FSAP) family. Brevinin subfamily. As to expression, expressed by the skin glands.

It localises to the secreted. Functionally, antimicrobial peptide. Active against some Gram-negative and a variety of Gram-positive bacterial strains. Active against fungus C.glabrata 090902 but not against C.albicans ATCC 10231. Shows hemolytic activity against human erythrocytes. This Sylvirana spinulosa (Fine-spined frog) protein is Brevinin-2SN1.